Consider the following 168-residue polypeptide: UPF0304 protein MJECS11 (168 aa).

The protein belongs to the UPF0304 family.

This Methanocaldococcus jannaschii (strain ATCC 43067 / DSM 2661 / JAL-1 / JCM 10045 / NBRC 100440) (Methanococcus jannaschii) protein is UPF0304 protein MJECS11.